The primary structure comprises 241 residues: Probable transcriptional regulatory protein str0195 (241 aa).

Belongs to the TACO1 family. YeeN subfamily.

It localises to the cytoplasm. The chain is Probable transcriptional regulatory protein str0195 from Streptococcus thermophilus (strain CNRZ 1066).